A 664-amino-acid chain; its full sequence is UvrABC system protein B (664 aa).

Residues 25–412 (KGLVSGLTDQ…LQVVEQLVRP (388 aa)) enclose the Helicase ATP-binding domain. 38-45 (GVTGSGKT) is a binding site for ATP. Residues 91-114 (YYDYYQPEAYVPQKDMYIEKDSDI) carry the Beta-hairpin motif. A Helicase C-terminal domain is found at 428-594 (QIDDLLEEVK…GIRKAIKDIN (167 aa)). The 36-residue stretch at 620–655 (ARLIKELESQMKKAAKNLEFERAALIRDRVVELRAA) folds into the UVR domain.

It belongs to the UvrB family. As to quaternary structure, forms a heterotetramer with UvrA during the search for lesions. Interacts with UvrC in an incision complex.

It is found in the cytoplasm. Its function is as follows. The UvrABC repair system catalyzes the recognition and processing of DNA lesions. A damage recognition complex composed of 2 UvrA and 2 UvrB subunits scans DNA for abnormalities. Upon binding of the UvrA(2)B(2) complex to a putative damaged site, the DNA wraps around one UvrB monomer. DNA wrap is dependent on ATP binding by UvrB and probably causes local melting of the DNA helix, facilitating insertion of UvrB beta-hairpin between the DNA strands. Then UvrB probes one DNA strand for the presence of a lesion. If a lesion is found the UvrA subunits dissociate and the UvrB-DNA preincision complex is formed. This complex is subsequently bound by UvrC and the second UvrB is released. If no lesion is found, the DNA wraps around the other UvrB subunit that will check the other stand for damage. The chain is UvrABC system protein B from Dehalococcoides mccartyi (strain CBDB1).